The chain runs to 794 residues: 6-hydroxypseudooxynicotine dehydrogenase complex subunit gamma (794 aa).

In terms of assembly, heterohexamer of 2 alpha (kdhA), 2 beta (kdhB) and 2 gamma (kdhC) subunit. Dimer of heterotrimers. Mo-molybdopterin cytosine dinucleotide is required as a cofactor.

It carries out the reaction 6-hydroxypseudooxynicotine + A + H2O = 2,6-dihydroxypseudooxynicotine + AH2. It participates in alkaloid degradation; nicotine degradation. Its function is as follows. Molybdo-flavoprotein enzyme complex involved in nicotine degradation. The subunit gamma (large subunit) contains the substrate-binding sites, the subunit alpha (medium subunit) binds FAD and the subunit beta (small subunit) has a 2Fe-2S ferredoxin-type domain which binds 2 2Fe-2S clusters. The polypeptide is 6-hydroxypseudooxynicotine dehydrogenase complex subunit gamma (kdhC) (Paenarthrobacter nicotinovorans (Arthrobacter nicotinovorans)).